Reading from the N-terminus, the 256-residue chain is Protein crossbronx-like (256 aa).

Positions 17–179 (NQGYKVLAEY…AKVSILWSCQ (163 aa)) constitute a UBC core domain.

Belongs to the ubiquitin-conjugating enzyme family. FTS subfamily.

The protein is Protein crossbronx-like of Drosophila virilis (Fruit fly).